The chain runs to 327 residues: DNA-directed RNA polymerase subunit alpha (327 aa).

Residues 1 to 233 are alpha N-terminal domain (alpha-NTD); that stretch reads MVREKVKVST…NLFIPFLHVE (233 aa). The interval 267–327 is alpha C-terminal domain (alpha-CTD); it reads LAFQYIFIDQ…KKILDILEKK (61 aa).

This sequence belongs to the RNA polymerase alpha chain family. As to quaternary structure, in plastids the minimal PEP RNA polymerase catalytic core is composed of four subunits: alpha, beta, beta', and beta''. When a (nuclear-encoded) sigma factor is associated with the core the holoenzyme is formed, which can initiate transcription.

It is found in the plastid. It localises to the chloroplast. It catalyses the reaction RNA(n) + a ribonucleoside 5'-triphosphate = RNA(n+1) + diphosphate. Functionally, DNA-dependent RNA polymerase catalyzes the transcription of DNA into RNA using the four ribonucleoside triphosphates as substrates. The protein is DNA-directed RNA polymerase subunit alpha of Lobularia maritima (Sweet alyssum).